We begin with the raw amino-acid sequence, 74 residues long: Salivary glue protein Sgs-7 (74 aa).

The first 23 residues, 1–23 (MKLIAVTIIACILLIGFSDLALG), serve as a signal peptide directing secretion.

The chain is Salivary glue protein Sgs-7 (Sgs7) from Drosophila melanogaster (Fruit fly).